The chain runs to 109 residues: Nucleoid-associated protein Psyc_0793 (109 aa).

Belongs to the YbaB/EbfC family. Homodimer.

The protein resides in the cytoplasm. Its subcellular location is the nucleoid. In terms of biological role, binds to DNA and alters its conformation. May be involved in regulation of gene expression, nucleoid organization and DNA protection. The protein is Nucleoid-associated protein Psyc_0793 of Psychrobacter arcticus (strain DSM 17307 / VKM B-2377 / 273-4).